The chain runs to 180 residues: Protein Flattop (180 aa).

Residues 111 to 180 (PQISGKASGK…AGDKVLQAQS (70 aa)) form a disordered region.

The protein belongs to the Flattop family.

The protein localises to the cytoplasm. The protein resides in the cytoskeleton. It is found in the cilium basal body. Its subcellular location is the cell projection. It localises to the cilium. The protein localises to the apical cell membrane. The protein resides in the cilium axoneme. Its function is as follows. Microtubule inner protein (MIP) part of the dynein-decorated doublet microtubules (DMTs) in cilia axoneme. Acts as a regulator of cilium basal body docking and positioning in mono- and multiciliated cells. Regulates basal body docking and cilia formation in multiciliated lung cells. Regulates kinocilium positioning and stereocilia bundle morphogenesis in the inner ear. This is Protein Flattop from Xenopus laevis (African clawed frog).